The chain runs to 310 residues: N-acetyl-gamma-glutamyl-phosphate reductase (310 aa).

Residue C117 is part of the active site.

It belongs to the NAGSA dehydrogenase family. Type 2 subfamily.

The protein resides in the cytoplasm. It catalyses the reaction N-acetyl-L-glutamate 5-semialdehyde + phosphate + NADP(+) = N-acetyl-L-glutamyl 5-phosphate + NADPH + H(+). Its pathway is amino-acid biosynthesis; L-arginine biosynthesis; N(2)-acetyl-L-ornithine from L-glutamate: step 3/4. Functionally, catalyzes the NADPH-dependent reduction of N-acetyl-5-glutamyl phosphate to yield N-acetyl-L-glutamate 5-semialdehyde. The chain is N-acetyl-gamma-glutamyl-phosphate reductase from Rhizobium rhizogenes (strain K84 / ATCC BAA-868) (Agrobacterium radiobacter).